We begin with the raw amino-acid sequence, 428 residues long: Enolase (428 aa).

Q163 contributes to the (2R)-2-phosphoglycerate binding site. The active-site Proton donor is E205. Residues D242, E284, and D311 each coordinate Mg(2+). (2R)-2-phosphoglycerate-binding residues include K336, R365, S366, and K387. The Proton acceptor role is filled by K336.

This sequence belongs to the enolase family. Mg(2+) is required as a cofactor.

Its subcellular location is the cytoplasm. The protein resides in the secreted. It is found in the cell surface. It carries out the reaction (2R)-2-phosphoglycerate = phosphoenolpyruvate + H2O. It participates in carbohydrate degradation; glycolysis; pyruvate from D-glyceraldehyde 3-phosphate: step 4/5. Its function is as follows. Catalyzes the reversible conversion of 2-phosphoglycerate (2-PG) into phosphoenolpyruvate (PEP). It is essential for the degradation of carbohydrates via glycolysis. In Tropheryma whipplei (strain TW08/27) (Whipple's bacillus), this protein is Enolase.